The following is a 378-amino-acid chain: Flagellin E (378 aa).

Coiled coils occupy residues 98-139 and 311-339; these read QSAN…KLLN and MQNR…IKDA.

It belongs to the bacterial flagellin family. Heteromer of multiple flagellin subunits including FlaA, FlaB, FlaC, FlaD and FlaE.

The protein resides in the secreted. It localises to the bacterial flagellum. Flagellin is the subunit protein which polymerizes to form the filaments of bacterial flagella. FlaE is not essential for flagellar synthesis and motility. The polypeptide is Flagellin E (flaE) (Vibrio cholerae serotype O1 (strain ATCC 39541 / Classical Ogawa 395 / O395)).